The primary structure comprises 300 residues: Acetylglutamate kinase (300 aa).

Substrate-binding positions include 72–73 (GG), Arg-94, and Asn-197.

Belongs to the acetylglutamate kinase family. ArgB subfamily.

It localises to the cytoplasm. It catalyses the reaction N-acetyl-L-glutamate + ATP = N-acetyl-L-glutamyl 5-phosphate + ADP. It participates in amino-acid biosynthesis; L-arginine biosynthesis; N(2)-acetyl-L-ornithine from L-glutamate: step 2/4. Its function is as follows. Catalyzes the ATP-dependent phosphorylation of N-acetyl-L-glutamate. The protein is Acetylglutamate kinase of Aromatoleum aromaticum (strain DSM 19018 / LMG 30748 / EbN1) (Azoarcus sp. (strain EbN1)).